A 1452-amino-acid chain; its full sequence is CLIP-associating protein 1 (1452 aa).

HEAT repeat units lie at residues 68–87 (LLGM…RFRS), 88–124 (QIGT…QASN), and 163–200 (LTLS…HVGE). The disordered stretch occupies residues 239-299 (KNFDDEDSVD…GTAKEGAGGV (61 aa)). A compositionally biased stretch (low complexity) spans 253–267 (SSASSSASSKAPQAA). HEAT repeat units follow at residues 407-442 (HGAE…IRQT) and 443-479 (HVPR…EWQT). Disordered regions lie at residues 545 to 735 (SDSI…GISQ) and 771 to 792 (YGMY…ERSY). The span at 550 to 569 (SLPQSDRSSSSSQESLNRPL) shows a compositional bias: low complexity. A compositionally biased stretch (polar residues) spans 573–597 (RSPTGSTVSRASTATSKSTPGSLQR). Low complexity-rich tracts occupy residues 606 to 621 (AATC…ASAA), 645 to 659 (QSSG…TPAD), and 668 to 682 (VVSQ…SSPG). Over residues 715-724 (QGCSRETSPS) the composition is skewed to polar residues. The span at 781–792 (SDASSACSERSY) shows a compositional bias: low complexity. The HEAT 6 repeat unit spans residues 926-963 (QQFNILMRFIVDQTQTPNLKVKVAILKYIESLARQMDP). The disordered stretch occupies residues 1033-1076 (LKNSSNSSMGSPSNTIGRTPSRHSSSRASPLTSPTNCSHGGLSP). Residues 1034-1046 (KNSSNSSMGSPSN) are compositionally biased toward low complexity. Polar residues predominate over residues 1058-1070 (SRASPLTSPTNCS). 2 HEAT repeats span residues 1256–1293 (EHFK…NQPA) and 1374–1411 (QILP…VIGE).

The protein belongs to the CLASP family. As to quaternary structure, interacts (via C-terminus) with clip1/clip-170, and cenpe.

It localises to the cytoplasm. It is found in the cytoskeleton. The protein localises to the microtubule organizing center. The protein resides in the centrosome. Its subcellular location is the chromosome. It localises to the centromere. It is found in the kinetochore. The protein localises to the spindle. The protein resides in the golgi apparatus. Its subcellular location is the trans-Golgi network. Its function is as follows. Microtubule plus-end tracking protein that promotes the stabilization of dynamic microtubules during anaphase. Plays a crucial role in chromatin-induced microtubule formation. May also act at microtubule minus ends. May be involved in the nucleation of noncentrosomal microtubules originating from the trans-Golgi network (TGN). This chain is CLIP-associating protein 1, found in Xenopus tropicalis (Western clawed frog).